The primary structure comprises 227 residues: Cytochrome c oxidase subunit 2 (227 aa).

The Mitochondrial intermembrane segment spans residues Met-1–Ala-14. A helical membrane pass occupies residues Pro-15–Met-45. The Mitochondrial matrix segment spans residues Leu-46–Gln-59. The chain crosses the membrane as a helical span at residues Glu-60–Met-87. The Mitochondrial intermembrane segment spans residues Asp-88–Leu-227. Cu cation contacts are provided by His-161, Cys-196, Glu-198, Cys-200, His-204, and Met-207. Glu-198 is a binding site for Mg(2+). Tyr-218 is subject to Phosphotyrosine.

This sequence belongs to the cytochrome c oxidase subunit 2 family. In terms of assembly, component of the cytochrome c oxidase (complex IV, CIV), a multisubunit enzyme composed of 14 subunits. The complex is composed of a catalytic core of 3 subunits MT-CO1, MT-CO2 and MT-CO3, encoded in the mitochondrial DNA, and 11 supernumerary subunits COX4I, COX5A, COX5B, COX6A, COX6B, COX6C, COX7A, COX7B, COX7C, COX8 and NDUFA4, which are encoded in the nuclear genome. The complex exists as a monomer or a dimer and forms supercomplexes (SCs) in the inner mitochondrial membrane with NADH-ubiquinone oxidoreductase (complex I, CI) and ubiquinol-cytochrome c oxidoreductase (cytochrome b-c1 complex, complex III, CIII), resulting in different assemblies (supercomplex SCI(1)III(2)IV(1) and megacomplex MCI(2)III(2)IV(2)). Found in a complex with TMEM177, COA6, COX18, COX20, SCO1 and SCO2. Interacts with TMEM177 in a COX20-dependent manner. Interacts with COX20. Interacts with COX16. Requires Cu cation as cofactor.

It is found in the mitochondrion inner membrane. It catalyses the reaction 4 Fe(II)-[cytochrome c] + O2 + 8 H(+)(in) = 4 Fe(III)-[cytochrome c] + 2 H2O + 4 H(+)(out). Component of the cytochrome c oxidase, the last enzyme in the mitochondrial electron transport chain which drives oxidative phosphorylation. The respiratory chain contains 3 multisubunit complexes succinate dehydrogenase (complex II, CII), ubiquinol-cytochrome c oxidoreductase (cytochrome b-c1 complex, complex III, CIII) and cytochrome c oxidase (complex IV, CIV), that cooperate to transfer electrons derived from NADH and succinate to molecular oxygen, creating an electrochemical gradient over the inner membrane that drives transmembrane transport and the ATP synthase. Cytochrome c oxidase is the component of the respiratory chain that catalyzes the reduction of oxygen to water. Electrons originating from reduced cytochrome c in the intermembrane space (IMS) are transferred via the dinuclear copper A center (CU(A)) of subunit 2 and heme A of subunit 1 to the active site in subunit 1, a binuclear center (BNC) formed by heme A3 and copper B (CU(B)). The BNC reduces molecular oxygen to 2 water molecules using 4 electrons from cytochrome c in the IMS and 4 protons from the mitochondrial matrix. This chain is Cytochrome c oxidase subunit 2 (MT-CO2), found in Galago senegalensis (Northern lesser bushbaby).